The following is a 421-amino-acid chain: Phosphoribosylamine--glycine ligase (421 aa).

The ATP-grasp domain maps to 108–314; that stretch reads KEIMVKYNVP…FAQNIDDIMM (207 aa). 134 to 195 contributes to the ATP binding site; sequence IEEQGAPIVV…EEFLDGEEFS (62 aa). The Mg(2+) site is built by Glu284 and Asn286.

Belongs to the GARS family. It depends on Mg(2+) as a cofactor. Mn(2+) is required as a cofactor.

It catalyses the reaction 5-phospho-beta-D-ribosylamine + glycine + ATP = N(1)-(5-phospho-beta-D-ribosyl)glycinamide + ADP + phosphate + H(+). It participates in purine metabolism; IMP biosynthesis via de novo pathway; N(1)-(5-phospho-D-ribosyl)glycinamide from 5-phospho-alpha-D-ribose 1-diphosphate: step 2/2. The chain is Phosphoribosylamine--glycine ligase from Streptococcus pyogenes serotype M18 (strain MGAS8232).